Reading from the N-terminus, the 776-residue chain is Outer capsid protein VP4 (776 aa).

The interval 65–224 is spike head; that stretch reads LDGPYQPTSF…TCTEYINNGL (160 aa). Cysteines 203 and 216 form a disulfide. A spike body and stalk (antigen domain) region spans residues 248-479; that stretch reads AQANEDIVVS…LISLVPSNDD (232 aa). A DGE motif; interaction with ITGA2/ITGB1 heterodimer motif is present at residues 308 to 310; the sequence is DGE. Cysteines 318 and 380 form a disulfide. The hydrophobic; possible role in virus entry into host cell stretch occupies residues 389–409; the sequence is LPVGQWPVMTGGAVSLHSAGV. The YGL motif; interaction with ITGA4 motif lies at 448–450; that stretch reads YGL. Positions 484–511 form a coiled coil; that stretch reads ITNSVTVRQDLERQLGELREEFNALSQE. The interval 510–776 is spike foot; it reads QEIAMSQLIY…IEQLIMQCRL (267 aa). A KID motif; interaction with HSPA8 motif is present at residues 644–646; that stretch reads KID.

This sequence belongs to the rotavirus VP4 family. In terms of assembly, homotrimer. VP4 adopts a dimeric appearance above the capsid surface, while forming a trimeric base anchored inside the capsid layer. Only hints of the third molecule are observed above the capsid surface. It probably performs a series of molecular rearrangements during viral entry. Prior to trypsin cleavage, it is flexible. The priming trypsin cleavage triggers its rearrangement into rigid spikes with approximate two-fold symmetry of their protruding parts. After an unknown second triggering event, cleaved VP4 may undergo another rearrangement, in which two VP5* subunits fold back on themselves and join a third subunit to form a tightly associated trimer, shaped like a folded umbrella. Interacts with VP6. Interacts with VP7. As to quaternary structure, homotrimer. The trimer is coiled-coil stabilized by its C-terminus, however, its N-terminus, known as antigen domain or 'body', seems to be flexible allowing it to self-associate either as a dimer or a trimer. Interacts with host ITGA2 (via ITAG2 I-domain); this interaction occurs when ITGA2 is part of the integrin heterodimer ITGA2/ITGB1. Interacts with host integrin heterodimer ITGA4/ITGB1 and ITGA4/ITGB7. Interacts with host HSPA8/HSP70. Post-translationally, proteolytic cleavage by trypsin results in activation of VP4 functions and greatly increases infectivity. The penetration into the host cell is dependent on trypsin treatment of VP4. It produces two peptides, VP5* and VP8* that remain associated with the virion. Cleavage of VP4 by trypsin occurs in vivo in the lumen of the intestine prior to infection of enterocytes.

The protein resides in the virion. The protein localises to the host rough endoplasmic reticulum. It localises to the host cell membrane. Its subcellular location is the host cytoplasm. It is found in the host cytoskeleton. The protein resides in the host endoplasmic reticulum-Golgi intermediate compartment. Its function is as follows. Spike-forming protein that mediates virion attachment to the host epithelial cell receptors and plays a major role in cell penetration, determination of host range restriction and virulence. Rotavirus attachment and entry into the host cell probably involves multiple sequential contacts between the outer capsid proteins VP4 and VP7, and the cell receptors. It is subsequently lost, together with VP7, following virus entry into the host cell. Following entry into the host cell, low intracellular or intravesicular Ca(2+) concentration probably causes the calcium-stabilized VP7 trimers to dissociate from the virion. This step is probably necessary for the membrane-disrupting entry step and the release of VP4, which is locked onto the virion by VP7. During the virus exit from the host cell, VP4 seems to be required to target the newly formed virions to the host cell lipid rafts. Functionally, forms the spike 'foot' and 'body' and acts as a membrane permeabilization protein that mediates release of viral particles from endosomal compartments into the cytoplasm. During entry, the part of VP5* that protrudes from the virus folds back on itself and reorganizes from a local dimer to a trimer. This reorganization may be linked to membrane penetration by exposing VP5* hydrophobic region. In integrin-dependent strains, VP5* targets the integrin heterodimer ITGA2/ITGB1 for cell attachment. In terms of biological role, forms the head of the spikes and mediates the recognition of specific host cell surface glycans. It is the viral hemagglutinin and an important target of neutralizing antibodies. In sialic acid-dependent strains, VP8* binds to host cell sialic acid, most probably a ganglioside, providing the initial contact. In some other strains, VP8* mediates the attachment to histo-blood group antigens (HBGAs) for viral entry. The chain is Outer capsid protein VP4 from Rotavirus A (strain RVA/Monkey/United States/RRV/1975/G3P5B[3]) (RV-A).